A 611-amino-acid polypeptide reads, in one-letter code: Aspartate--tRNA ligase, mitochondrial (611 aa).

Residues 1–30 (MVLSRLPACLLPLVGTKVSIQGWLVATSRQ) constitute a mitochondrion transit peptide. Glu-192 contacts L-aspartate. Residues 216–219 (QQYK) are aspartate. Arg-238 serves as a coordination point for L-aspartate. Residues 238–240 (RDE) and Glu-502 each bind ATP. Arg-509 contacts L-aspartate. 554-557 (GFDR) lines the ATP pocket.

Belongs to the class-II aminoacyl-tRNA synthetase family. Type 1 subfamily.

It localises to the mitochondrion. It catalyses the reaction tRNA(Asp) + L-aspartate + ATP = L-aspartyl-tRNA(Asp) + AMP + diphosphate. This Schizosaccharomyces pombe (strain 972 / ATCC 24843) (Fission yeast) protein is Aspartate--tRNA ligase, mitochondrial (msd1).